We begin with the raw amino-acid sequence, 457 residues long: Acetylcholine receptor subunit alpha-1-B (457 aa).

An N-terminal signal peptide occupies residues 1-20; sequence MDYTASCLIFLFIAAGTVFG. At 21–230 the chain is on the extracellular side; the sequence is TDHETRLIGD…ITYHFVLQRL (210 aa). Cystine bridges form between cysteine 148–cysteine 162 and cysteine 212–cysteine 213. Asparagine 161 is a glycosylation site (N-linked (GlcNAc...) asparagine). Helical transmembrane passes span 231-255, 263-281, and 297-316; these read PLYFIVNVIIPCLLFSFLTGLVFYL, MTLSISVLLSLTVFLLVIV, and YMLFTMVFVIASIIITVIVI. The Cytoplasmic segment spans residues 317 to 428; the sequence is NTHHRSPSTH…WKFVAMVLDH (112 aa). The chain crosses the membrane as a helical span at residues 429–447; it reads ILLAVFMTVCVIGTLAVFA.

The protein belongs to the ligand-gated ion channel (TC 1.A.9) family. Acetylcholine receptor (TC 1.A.9.1) subfamily. Alpha-1/CHRNA1 sub-subfamily. As to quaternary structure, one of the alpha chains that assemble within the acetylcholine receptor, a pentamer of two alpha chains, a beta, a delta, and a gamma or epsilon chains.

It localises to the postsynaptic cell membrane. It is found in the cell membrane. The enzyme catalyses K(+)(in) = K(+)(out). The catalysed reaction is Na(+)(in) = Na(+)(out). Upon acetylcholine binding, the AChR responds by an extensive change in conformation that affects all subunits and leads to opening of an ion-conducting channel across the plasma membrane. This is Acetylcholine receptor subunit alpha-1-B (chrna1-b) from Xenopus laevis (African clawed frog).